A 511-amino-acid polypeptide reads, in one-letter code: Lysine--tRNA ligase (511 aa).

Residues Glu-421 and Glu-428 each coordinate Mg(2+).

Belongs to the class-II aminoacyl-tRNA synthetase family. In terms of assembly, homodimer. Requires Mg(2+) as cofactor.

It localises to the cytoplasm. The catalysed reaction is tRNA(Lys) + L-lysine + ATP = L-lysyl-tRNA(Lys) + AMP + diphosphate. The sequence is that of Lysine--tRNA ligase from Janthinobacterium sp. (strain Marseille) (Minibacterium massiliensis).